The sequence spans 204 residues: MTAGVSPDDYSIEPELLLRAYATGIFPMAEEADDPEVFWVRPERRGVIPLDGFHMPKSLQKTIRQGIFDIKLDNDFDGVIEGCASGTGERARTWINGPIREAYKNLFEIGHCHTVEAWHDGQLVGGLYGVTLGRAFFGESMFTRKRDASKVCLAYLVQHLVKQGFVLLDTQFTTPHLERFGAVEVPRKKYEKLLENALDGIVRF.

Belongs to the L/F-transferase family.

Its subcellular location is the cytoplasm. It catalyses the reaction N-terminal L-lysyl-[protein] + L-leucyl-tRNA(Leu) = N-terminal L-leucyl-L-lysyl-[protein] + tRNA(Leu) + H(+). The catalysed reaction is N-terminal L-arginyl-[protein] + L-leucyl-tRNA(Leu) = N-terminal L-leucyl-L-arginyl-[protein] + tRNA(Leu) + H(+). The enzyme catalyses L-phenylalanyl-tRNA(Phe) + an N-terminal L-alpha-aminoacyl-[protein] = an N-terminal L-phenylalanyl-L-alpha-aminoacyl-[protein] + tRNA(Phe). Its function is as follows. Functions in the N-end rule pathway of protein degradation where it conjugates Leu, Phe and, less efficiently, Met from aminoacyl-tRNAs to the N-termini of proteins containing an N-terminal arginine or lysine. This chain is Leucyl/phenylalanyl-tRNA--protein transferase, found in Brucella anthropi (strain ATCC 49188 / DSM 6882 / CCUG 24695 / JCM 21032 / LMG 3331 / NBRC 15819 / NCTC 12168 / Alc 37) (Ochrobactrum anthropi).